Here is an 867-residue protein sequence, read N- to C-terminus: GRB2-associated and regulator of MAPK protein 1 (867 aa).

The interval 12 to 322 (NNITWSTTTL…GLLQGESWFE (311 aa)) is CABIT. Tyr464 is modified (phosphotyrosine). 3 disordered regions span residues 511–530 (SADV…AVKE), 536–594 (DAPP…QIES), and 735–758 (PPRT…TADA). 2 stretches are compositionally biased toward polar residues: residues 544–554 (SSKQAGSSSAT) and 569–581 (SPSP…SSGL). Residues 740 to 749 (KCTDAKKDAE) are compositionally biased toward basic and acidic residues. An SAM domain is found at 802–867 (ISIEEISKSL…QFINGWRPKM (66 aa)).

Belongs to the GAREM family.

In terms of biological role, adapter protein that may provide a link between cell surface epidermal growth factor receptor and the MAPK/ERK signaling pathway. May promote cell proliferation. The polypeptide is GRB2-associated and regulator of MAPK protein 1 (garem1) (Danio rerio (Zebrafish)).